A 190-amino-acid chain; its full sequence is Threonylcarbamoyl-AMP synthase (190 aa).

The YrdC-like domain maps to 7–190 (LSSLIKCIRK…IVNGKLIRYV (184 aa)).

The protein belongs to the SUA5 family. TsaC subfamily.

It localises to the cytoplasm. The enzyme catalyses L-threonine + hydrogencarbonate + ATP = L-threonylcarbamoyladenylate + diphosphate + H2O. In terms of biological role, required for the formation of a threonylcarbamoyl group on adenosine at position 37 (t(6)A37) in tRNAs that read codons beginning with adenine. Catalyzes the conversion of L-threonine, HCO(3)(-)/CO(2) and ATP to give threonylcarbamoyl-AMP (TC-AMP) as the acyladenylate intermediate, with the release of diphosphate. This is Threonylcarbamoyl-AMP synthase from Buchnera aphidicola subsp. Schizaphis graminum (strain Sg).